The chain runs to 186 residues: Chromophore lyase CpcS/CpeS 1 (186 aa).

The protein belongs to the CpcS/CpeS biliprotein lyase family.

In terms of biological role, covalently attaches a chromophore to Cys residue(s) of phycobiliproteins. The sequence is that of Chromophore lyase CpcS/CpeS 1 from Synechocystis sp. (strain ATCC 27184 / PCC 6803 / Kazusa).